The chain runs to 500 residues: Putative DNA recombinase (500 aa).

A Resolvase/invertase-type recombinase catalytic domain is found at 1–144 (MIAIYVRVST…SGRLQKMKKG (144 aa)). S9 (O-(5'-phospho-DNA)-serine intermediate) is an active-site residue. The segment at residues 152 to 288 (LYGYKFVKEK…QELLGQSKRK (137 aa)) is a DNA-binding region (recombinase). A coiled-coil region spans residues 372-448 (KEAEQSNHLS…IQSKMKVLDD (77 aa)).

The protein in the N-terminal section; belongs to the site-specific recombinase resolvase family.

Functionally, putative site-specific recombinase having a very important role in sporulation. It probably plays a role in the recombination of SpoIIIC and SpoIVCB to form sigma K factor. In Bacillus subtilis (strain 168), this protein is Putative DNA recombinase (cisA).